Consider the following 681-residue polypeptide: T-box brain protein 1 (681 aa).

Disordered regions lie at residues 43–83 (TDNL…RSKL) and 108–127 (SQSSQPQSAATAPSAMFPYP). Residues 58-68 (GMTNQSDTDNF) show a composition bias toward polar residues. Residues 108 to 122 (SQSSQPQSAATAPSA) show a composition bias toward low complexity. Residues 213–393 (LWLKFHRHQT…HNPFAKGFRD (181 aa)) constitute a DNA-binding region (T-box). A Phosphothreonine modification is found at threonine 408. Phosphoserine is present on serine 410. The interval 447–483 (PGAGAGPGPGTDRSVPHTNGLLSPQQAEDPGAPSPQR) is disordered. The segment covering 462 to 472 (PHTNGLLSPQQ) has biased composition (polar residues). Serine 594 is subject to Phosphoserine. Residues 597–655 (APAAEDAKPKDLSDSSWIETPSSIKSIDSSDSGIYEQAKRRRISPADTPVSESSSPLKS) are disordered. Positions 618 to 628 (SSIKSIDSSDS) are enriched in low complexity. Serine 640 carries the post-translational modification Phosphoserine.

Homodimer. Part of a complex containing CASK, TBR1 and TSPYL2; may modulate gene expression in response to neuronal synaptic activity. Forms homodimers. Interacts with FOXP2. Interacts with FOXP1. Interacts with BCL11A. As to expression, expressed in the developing and adult cortex. Expressed in the olfactory bulbs.

It is found in the nucleus. Transcriptional repressor involved in multiple aspects of cortical development, including neuronal migration, laminar and areal identity, and axonal projection. As transcriptional repressor of FEZF2, it blocks the formation of the corticospinal (CS) tract from layer 6 projection neurons, thereby restricting the origin of CS axons specifically to layer 5 neurons. This chain is T-box brain protein 1 (Tbr1), found in Mus musculus (Mouse).